The following is a 528-amino-acid chain: GMP synthase [glutamine-hydrolyzing] (528 aa).

Residues 13-204 (AIVILDFGSQ…VYHICGCEPD (192 aa)) form the Glutamine amidotransferase type-1 domain. Residue Cys-90 is the Nucleophile of the active site. Catalysis depends on residues His-178 and Glu-180. Positions 205–403 (WTTEAFIDEA…LGLPEEIVSR (199 aa)) constitute a GMPS ATP-PPase domain. 232–238 (SGGVDSS) is an ATP binding site.

As to quaternary structure, homodimer.

The enzyme catalyses XMP + L-glutamine + ATP + H2O = GMP + L-glutamate + AMP + diphosphate + 2 H(+). The protein operates within purine metabolism; GMP biosynthesis; GMP from XMP (L-Gln route): step 1/1. Catalyzes the synthesis of GMP from XMP. This is GMP synthase [glutamine-hydrolyzing] from Synechococcus sp. (strain CC9311).